The sequence spans 309 residues: Porphobilinogen deaminase (309 aa).

The residue at position 241 (Cys-241) is an S-(dipyrrolylmethanemethyl)cysteine.

This sequence belongs to the HMBS family. As to quaternary structure, monomer. Requires dipyrromethane as cofactor.

The catalysed reaction is 4 porphobilinogen + H2O = hydroxymethylbilane + 4 NH4(+). The protein operates within porphyrin-containing compound metabolism; protoporphyrin-IX biosynthesis; coproporphyrinogen-III from 5-aminolevulinate: step 2/4. Functionally, tetrapolymerization of the monopyrrole PBG into the hydroxymethylbilane pre-uroporphyrinogen in several discrete steps. This chain is Porphobilinogen deaminase, found in Bacillus cereus (strain G9842).